Consider the following 294-residue polypeptide: tRNA dimethylallyltransferase (294 aa).

9–16 (GATATGKS) contributes to the ATP binding site. 11-16 (TATGKS) contacts substrate. The interaction with substrate tRNA stretch occupies residues 34-37 (DSRQ).

Belongs to the IPP transferase family. As to quaternary structure, monomer. The cofactor is Mg(2+).

The catalysed reaction is adenosine(37) in tRNA + dimethylallyl diphosphate = N(6)-dimethylallyladenosine(37) in tRNA + diphosphate. Functionally, catalyzes the transfer of a dimethylallyl group onto the adenine at position 37 in tRNAs that read codons beginning with uridine, leading to the formation of N6-(dimethylallyl)adenosine (i(6)A). This chain is tRNA dimethylallyltransferase, found in Trichormus variabilis (strain ATCC 29413 / PCC 7937) (Anabaena variabilis).